The following is a 37-amino-acid chain: Cytochrome b6-f complex subunit 5 (37 aa).

A helical membrane pass occupies residues 5 to 25 (LLCGIVLGLIPITLAGLFMAA).

It belongs to the PetG family. In terms of assembly, the 4 large subunits of the cytochrome b6-f complex are cytochrome b6, subunit IV (17 kDa polypeptide, PetD), cytochrome f and the Rieske protein, while the 4 small subunits are PetG, PetL, PetM and PetN. The complex functions as a dimer.

It localises to the cellular thylakoid membrane. Functionally, component of the cytochrome b6-f complex, which mediates electron transfer between photosystem II (PSII) and photosystem I (PSI), cyclic electron flow around PSI, and state transitions. PetG is required for either the stability or assembly of the cytochrome b6-f complex. In Synechococcus elongatus (strain ATCC 33912 / PCC 7942 / FACHB-805) (Anacystis nidulans R2), this protein is Cytochrome b6-f complex subunit 5.